The following is a 594-amino-acid chain: Tripeptidyl-peptidase sed4 (594 aa).

The first 20 residues, 1 to 20 (MLSSTLYAGWLLSLAAPALC), serve as a signal peptide directing secretion. A propeptide spans 21–187 (VVQEKLSAVP…AVKLPALPRR (167 aa)) (removed in mature form). Residues asparagine 191, asparagine 229, and asparagine 250 are each glycosylated (N-linked (GlcNAc...) asparagine). Positions 197–594 (LITPDCLVEM…MKLKELVLSL (398 aa)) constitute a Peptidase S53 domain. Residues glutamate 272, aspartate 276, and serine 494 each act as charge relay system in the active site. Aspartate 536 and isoleucine 537 together coordinate Ca(2+). Residue asparagine 568 is glycosylated (N-linked (GlcNAc...) asparagine). 2 residues coordinate Ca(2+): glycine 572 and aspartate 574.

It depends on Ca(2+) as a cofactor. Post-translationally, N-glycosylated.

It is found in the secreted. The protein localises to the extracellular space. The enzyme catalyses Release of an N-terminal tripeptide from a polypeptide.. In terms of biological role, secreted tripeptidyl-peptidase which degrades proteins at acidic pHs and is involved in virulence. This chain is Tripeptidyl-peptidase sed4 (sed4), found in Aspergillus fumigatus (strain ATCC MYA-4609 / CBS 101355 / FGSC A1100 / Af293) (Neosartorya fumigata).